A 1421-amino-acid chain; its full sequence is ALK tyrosine kinase receptor homolog scd-2 (1421 aa).

The first 20 residues, Met-1 to Ala-20, serve as a signal peptide directing secretion. The Extracellular portion of the chain corresponds to Ile-21–Thr-903. 6 N-linked (GlcNAc...) asparagine glycosylation sites follow: Asn-24, Asn-44, Asn-70, Asn-83, Asn-119, and Asn-201. An LDL-receptor class A domain is found at Gln-300–Cys-338. 3 disulfides stabilise this stretch: Cys-301–Cys-317, Cys-309–Cys-329, and Cys-323–Cys-338. Residues Gly-339–Glu-542 enclose the MAM domain. 11 N-linked (GlcNAc...) asparagine glycosylation sites follow: Asn-342, Asn-362, Asn-495, Asn-533, Asn-546, Asn-633, Asn-726, Asn-793, Asn-849, Asn-873, and Asn-893. The helical transmembrane segment at Leu-904–Val-924 threads the bilayer. Over Tyr-925–Arg-1421 the chain is Cytoplasmic. The region spanning Ile-976–Val-1261 is the Protein kinase domain. ATP is bound by residues Leu-982–Val-990 and Lys-1003. Asp-1106 (proton acceptor) is an active-site residue.

The protein belongs to the protein kinase superfamily. Tyr protein kinase family. Insulin receptor subfamily. In terms of assembly, interacts (via cytoplasmic domain) with fsn-1 (via SPRY domain). Expressed in AIA sensory neurons.

Its subcellular location is the cell membrane. The enzyme catalyses L-tyrosyl-[protein] + ATP = O-phospho-L-tyrosyl-[protein] + ADP + H(+). In terms of biological role, probable tyrosine-protein kinase receptor which regulates the dauer/non-dauer developmental decision probably by controlling daf-3 transcriptional activity in parallel or together with the TGF-beta pathway. Regulates integration of conflicting sensory cues in AIA interneurons. May act as a receptor for hen-1. In AWA neurons, together with hen-1, plays a role in regulating olfactory adaptation by controlling the forgetting sensory responses to odorants such as diacetyl. This chain is ALK tyrosine kinase receptor homolog scd-2, found in Caenorhabditis elegans.